We begin with the raw amino-acid sequence, 231 residues long: Probable septum site-determining protein MinC (231 aa).

Belongs to the MinC family. Interacts with MinD and FtsZ.

Its function is as follows. Cell division inhibitor that blocks the formation of polar Z ring septums. Rapidly oscillates between the poles of the cell to destabilize FtsZ filaments that have formed before they mature into polar Z rings. Prevents FtsZ polymerization. The sequence is that of Probable septum site-determining protein MinC from Bradyrhizobium diazoefficiens (strain JCM 10833 / BCRC 13528 / IAM 13628 / NBRC 14792 / USDA 110).